The sequence spans 168 residues: Cytolysin secretion protein (168 aa).

The protein is Cytolysin secretion protein (vvhB) of Vibrio vulnificus (strain CMCP6).